Reading from the N-terminus, the 186-residue chain is RNA-free ribonuclease P (186 aa).

This sequence belongs to the HARP family.

The catalysed reaction is Endonucleolytic cleavage of RNA, removing 5'-extranucleotides from tRNA precursor.. In terms of biological role, RNA-free RNase P that catalyzes the removal of the 5'-leader sequence from pre-tRNA to produce the mature 5'-terminus. The chain is RNA-free ribonuclease P from Hydrogenobaculum sp. (strain Y04AAS1).